A 222-amino-acid chain; its full sequence is Protein-L-isoaspartate O-methyltransferase (222 aa).

Ser-69 is a catalytic residue.

It belongs to the methyltransferase superfamily. L-isoaspartyl/D-aspartyl protein methyltransferase family.

The protein localises to the cytoplasm. It carries out the reaction [protein]-L-isoaspartate + S-adenosyl-L-methionine = [protein]-L-isoaspartate alpha-methyl ester + S-adenosyl-L-homocysteine. Functionally, catalyzes the methyl esterification of L-isoaspartyl residues in peptides and proteins that result from spontaneous decomposition of normal L-aspartyl and L-asparaginyl residues. It plays a role in the repair and/or degradation of damaged proteins. The chain is Protein-L-isoaspartate O-methyltransferase from Nitrosomonas europaea (strain ATCC 19718 / CIP 103999 / KCTC 2705 / NBRC 14298).